A 462-amino-acid chain; its full sequence is Ribosomal protein uS12 methylthiotransferase RimO (462 aa).

The 116-residue stretch at 10–125 folds into the MTTase N-terminal domain; that stretch reads PRIGMVSLGC…VLDAVHRNLP (116 aa). [4Fe-4S] cluster-binding residues include Cys-19, Cys-55, Cys-84, Cys-160, Cys-164, and Cys-167. The region spanning 146-388 is the Radical SAM core domain; it reads LTPRHYAYLK…AVAEALSSAK (243 aa). A TRAM domain is found at 390 to 462; it reads QRRVGATMQV…RGHDLLAQPI (73 aa).

Belongs to the methylthiotransferase family. RimO subfamily. The cofactor is [4Fe-4S] cluster.

It is found in the cytoplasm. The catalysed reaction is L-aspartate(89)-[ribosomal protein uS12]-hydrogen + (sulfur carrier)-SH + AH2 + 2 S-adenosyl-L-methionine = 3-methylsulfanyl-L-aspartate(89)-[ribosomal protein uS12]-hydrogen + (sulfur carrier)-H + 5'-deoxyadenosine + L-methionine + A + S-adenosyl-L-homocysteine + 2 H(+). Its function is as follows. Catalyzes the methylthiolation of an aspartic acid residue of ribosomal protein uS12. This is Ribosomal protein uS12 methylthiotransferase RimO from Verminephrobacter eiseniae (strain EF01-2).